Here is a 43-residue protein sequence, read N- to C-terminus: Potassium channel toxin gamma-KTx 4.11 (43 aa).

Disulfide bonds link C5–C23, C11–C34, C20–C39, and C24–C41.

It belongs to the ergtoxin family. Gamma-KTx 4 subfamily. Expressed by the venom gland.

It is found in the secreted. In terms of biological role, reversibly blocks Kv11/ERG potassium channels. In Centruroides noxius (Mexican scorpion), this protein is Potassium channel toxin gamma-KTx 4.11.